A 427-amino-acid polypeptide reads, in one-letter code: Phosphoribosylamine--glycine ligase (427 aa).

The 206-residue stretch at 107 to 312 (KDLCARFNIP…LLALVNAAVD (206 aa)) folds into the ATP-grasp domain. Residue 133–193 (IRQQGAPIVV…EEFLDGEEAS (61 aa)) participates in ATP binding. Mg(2+) contacts are provided by Glu282 and Asn284.

Belongs to the GARS family. Requires Mg(2+) as cofactor. Mn(2+) serves as cofactor.

It catalyses the reaction 5-phospho-beta-D-ribosylamine + glycine + ATP = N(1)-(5-phospho-beta-D-ribosyl)glycinamide + ADP + phosphate + H(+). Its pathway is purine metabolism; IMP biosynthesis via de novo pathway; N(1)-(5-phospho-D-ribosyl)glycinamide from 5-phospho-alpha-D-ribose 1-diphosphate: step 2/2. This Brucella melitensis biotype 1 (strain ATCC 23456 / CCUG 17765 / NCTC 10094 / 16M) protein is Phosphoribosylamine--glycine ligase.